The following is a 282-amino-acid chain: Tryptophan 2,3-dioxygenase (282 aa).

Substrate is bound by residues 51–55, Tyr113, and Arg117; that span reads FIIQH. A heme-binding site is contributed by His240. Position 254 (Thr254) interacts with substrate.

It belongs to the tryptophan 2,3-dioxygenase family. Homotetramer. It depends on heme as a cofactor.

It catalyses the reaction L-tryptophan + O2 = N-formyl-L-kynurenine. Its pathway is amino-acid degradation; L-tryptophan degradation via kynurenine pathway; L-kynurenine from L-tryptophan: step 1/2. Its function is as follows. Heme-dependent dioxygenase that catalyzes the oxidative cleavage of the L-tryptophan (L-Trp) pyrrole ring and converts L-tryptophan to N-formyl-L-kynurenine. Catalyzes the oxidative cleavage of the indole moiety. This chain is Tryptophan 2,3-dioxygenase, found in Polaromonas naphthalenivorans (strain CJ2).